Consider the following 516-residue polypeptide: Putative F-box and FNIP repeat-containing protein L414 (516 aa).

The region spanning 4-49 (INDLNMDVILHLLTFLTDKNKLNFMMTCTHLYQFISCVKYNNFQLF) is the F-box domain. FNIP repeat units follow at residues 123-165 (FNHT…FGEN), 166-208 (FNKM…LMYS), 341-383 (YNPK…NFNG), 385-428 (YDNI…FGKL), and 429-470 (YNKP…FGYM).

In Acanthamoeba polyphaga (Amoeba), this protein is Putative F-box and FNIP repeat-containing protein L414.